Here is a 221-residue protein sequence, read N- to C-terminus: Iron-sulfur cluster repair protein YtfE (221 aa).

It belongs to the RIC family. YtfE subfamily. As to quaternary structure, homodimer.

It localises to the cytoplasm. Di-iron-containing protein involved in the repair of iron-sulfur clusters damaged by oxidative and nitrosative stress conditions. This chain is Iron-sulfur cluster repair protein YtfE, found in Yersinia pseudotuberculosis serotype IB (strain PB1/+).